A 396-amino-acid chain; its full sequence is Calsequestrin-1 (396 aa).

The signal sequence occupies residues 1-34 (MSATDRMGPRAVPGLRLALLLLLVLGTPKSGVQG). Residue tyrosine 43 is modified to Phosphotyrosine. The residue at position 81 (serine 81) is a Phosphoserine. Threonine 124 carries the phosphothreonine modification. Serine 216 carries the phosphoserine modification. Asparagine 350 is a glycosylation site (N-linked (GlcNAc...) asparagine).

It belongs to the calsequestrin family. Monomer; increases in response to a depletion of intracellular calcium. Homodimer. Homotetramer and homopolymer. Can form linear homooligomers. Ca(2+) ions promote oligomerization. Interacts (via C-terminal end and preferentially with the monomeric form) with STIM1; this interaction increases in response to a depletion of intracellular calcium, decreases both STIM1 aggregation and clustering, interaction of STIM1 with ORAI1 and store-operated Ca(2+) entry (SOCE) activity. Interacts with ASPH and TRDN. Post-translationally, N-glycosylated. In terms of tissue distribution, expressed in myoblasts (at protein level).

The protein resides in the endoplasmic reticulum. It is found in the sarcoplasmic reticulum. It localises to the sarcoplasmic reticulum lumen. Its subcellular location is the sarcoplasmic reticulum membrane. The protein localises to the mitochondrion matrix. Its function is as follows. Calsequestrin is a high-capacity, moderate affinity, calcium-binding protein and thus acts as an internal calcium store in muscle. Calcium ions are bound by clusters of acidic residues at the protein surface, often at the interface between subunits. Can bind around 80 Ca(2+) ions. Regulates the release of lumenal Ca(2+) via the calcium release channel RYR1; this plays an important role in triggering muscle contraction. Negatively regulates store-operated Ca(2+) entry (SOCE) activity. The polypeptide is Calsequestrin-1 (CASQ1) (Homo sapiens (Human)).